A 78-amino-acid polypeptide reads, in one-letter code: UPF0349 protein BPUM_2879 (78 aa).

Belongs to the UPF0349 family.

The polypeptide is UPF0349 protein BPUM_2879 (Bacillus pumilus (strain SAFR-032)).